The following is a 225-amino-acid chain: PKHD-type hydroxylase YbiX (225 aa).

In terms of domain architecture, Fe2OG dioxygenase spans 78–177; the sequence is TLSTPLFNRY…RVASFMWIQS (100 aa). Residues histidine 96, aspartate 98, and histidine 158 each contribute to the Fe cation site. Arginine 168 is a 2-oxoglutarate binding site.

The cofactor is Fe(2+). It depends on L-ascorbate as a cofactor.

The sequence is that of PKHD-type hydroxylase YbiX from Escherichia coli O17:K52:H18 (strain UMN026 / ExPEC).